The chain runs to 289 residues: Cbb3-type cytochrome c oxidase subunit FixP (289 aa).

The Cytoplasmic portion of the chain corresponds to 1-33 (MADKHKHVDEVSGVETTGHEWDGIRELNNPMPR). Residues 34-56 (WWVYSFYATIIWAIGYAIAYPSW) traverse the membrane as a helical segment. Residues 57-289 (PMLTEATKGM…VFVHSLGGGE (233 aa)) are Periplasmic-facing. 2 Cytochrome c domains span residues 110–198 (FAVS…VSLT) and 205–286 (HLVQ…HSLG). Heme c-binding residues include Cys123, Cys126, His127, Met175, Cys218, Cys221, His222, and Met263.

The protein belongs to the CcoP / FixP family. In terms of assembly, component of the cbb3-type cytochrome c oxidase at least composed of FixN, FixO, FixQ and FixP. Requires heme c as cofactor.

It is found in the cell inner membrane. It functions in the pathway energy metabolism; oxidative phosphorylation. C-type cytochrome. Part of the cbb3-type cytochrome c oxidase complex. FixP subunit is required for transferring electrons from donor cytochrome c via its heme groups to FixO subunit. From there, electrons are shuttled to the catalytic binuclear center of FixN subunit where oxygen reduction takes place. The complex also functions as a proton pump. The protein is Cbb3-type cytochrome c oxidase subunit FixP of Rhizobium meliloti (strain 1021) (Ensifer meliloti).